A 403-amino-acid chain; its full sequence is Anti-sigma-I factor RsgI8 (403 aa).

The Cytoplasmic segment spans residues 1 to 59 (MTKQKGTILKLKNNLAIIMTSDCKIVSIKRQPGMYEGLEISFNKNEIINKKNKLAFYSR). The region spanning 4 to 51 (QKGTILKLKNNLAIIMTSDCKIVSIKRQPGMYEGLEISFNKNEIINKK) is the RsgI N-terminal anti-sigma domain. The chain crosses the membrane as a helical span at residues 60–80 (IAAGIAAIFIIMVISFNLFNN). Topologically, residues 81-403 (NDVYAYVAID…KAKNSIEKMP (323 aa)) are extracellular. 3 stretches are compositionally biased toward basic and acidic residues: residues 254–314 (VHNV…EPAK), 324–335 (LPKDKTIPEEKT), and 349–403 (VEPK…EKMP). A disordered region spans residues 254 to 403 (VHNVKKEEPK…KAKNSIEKMP (150 aa)).

In terms of assembly, interacts (via RsgI N-terminal anti-sigma domain) with SigI8.

The protein localises to the cell membrane. Its function is as follows. Anti-sigma factor for SigI8. Negatively regulates SigI8 activity through direct interaction. The chain is Anti-sigma-I factor RsgI8 from Acetivibrio thermocellus (strain ATCC 27405 / DSM 1237 / JCM 9322 / NBRC 103400 / NCIMB 10682 / NRRL B-4536 / VPI 7372) (Clostridium thermocellum).